The following is a 224-amino-acid chain: Cytidylate kinase (224 aa).

Gly11–Thr19 lines the ATP pocket.

It belongs to the cytidylate kinase family. Type 1 subfamily.

The protein localises to the cytoplasm. The enzyme catalyses CMP + ATP = CDP + ADP. It carries out the reaction dCMP + ATP = dCDP + ADP. The sequence is that of Cytidylate kinase (cmk) from Bacillus subtilis (strain 168).